The sequence spans 192 residues: Xanthine phosphoribosyltransferase (192 aa).

Xanthine contacts are provided by leucine 20 and asparagine 27. 128–132 contacts 5-phospho-alpha-D-ribose 1-diphosphate; that stretch reads ANGDA. Lysine 156 serves as a coordination point for xanthine.

Belongs to the purine/pyrimidine phosphoribosyltransferase family. Xpt subfamily. Homodimer.

It localises to the cytoplasm. It catalyses the reaction XMP + diphosphate = xanthine + 5-phospho-alpha-D-ribose 1-diphosphate. Its pathway is purine metabolism; XMP biosynthesis via salvage pathway; XMP from xanthine: step 1/1. In terms of biological role, converts the preformed base xanthine, a product of nucleic acid breakdown, to xanthosine 5'-monophosphate (XMP), so it can be reused for RNA or DNA synthesis. The sequence is that of Xanthine phosphoribosyltransferase from Staphylococcus aureus (strain bovine RF122 / ET3-1).